A 638-amino-acid polypeptide reads, in one-letter code: Stress-activated protein kinase alpha (638 aa).

ANK repeat units follow at residues 43–72 (YGQS…TLKA), 80–109 (NGFS…NVDV), 113–146 (DLNT…NVNA), 150–181 (NGET…NVNL), 185–214 (FQES…DVDC), and 219–248 (ERKT…LFDW). The SAM domain maps to 240 to 303 (KKYKDLFDWL…LKETSNLANE (64 aa)). The Protein kinase domain maps to 351–620 (LEYTEKLGAG…RLVTIENEYR (270 aa)). ATP-binding positions include 357-365 (LGAGSSGKV) and lysine 378. The Proton acceptor role is filled by aspartate 472.

This sequence belongs to the protein kinase superfamily. TKL Ser/Thr protein kinase family. In terms of assembly, interacts with F-actin. Autophosphorylated.

It is found in the cytoplasm. Its subcellular location is the cytoskeleton. The enzyme catalyses L-seryl-[protein] + ATP = O-phospho-L-seryl-[protein] + ADP + H(+). It carries out the reaction L-threonyl-[protein] + ATP = O-phospho-L-threonyl-[protein] + ADP + H(+). Functionally, may be involved in cortical F-actin organization and resistance to osmotic stress. Activated upon cell detachment, in vitro. The polypeptide is Stress-activated protein kinase alpha (spkA-1) (Dictyostelium discoideum (Social amoeba)).